The primary structure comprises 560 residues: uncharacterized protein (560 aa).

An ABC transmembrane type-1 domain is found at 1-281 (MLWNWVALVG…LGSFFHVAMN (281 aa)). 7 helical membrane passes run 2–22 (LWNW…SYIL), 32–52 (LLSA…RAFA), 108–128 (IYFG…LTLF), 138–160 (TAII…NKIA), 168–188 (WSIY…LITL), 223–243 (VSLM…TALL), and 249–269 (QLSV…FIPL). Positions 314 to 547 (VEIKDLHFSY…QGAYAEMFQQ (234 aa)) constitute an ABC transporter domain. An ATP-binding site is contributed by 347–354 (GKSGCGKS).

Belongs to the ABC transporter superfamily.

The protein localises to the cell inner membrane. This is an uncharacterized protein from Haemophilus influenzae (strain ATCC 51907 / DSM 11121 / KW20 / Rd).